A 157-amino-acid polypeptide reads, in one-letter code: Transcriptional repressor NrdR (157 aa).

Residues 3-34 (CPFCGHAESQVKDSRPSEDGAAIRRRRMCPEC) fold into a zinc finger. Residues 49–139 (LIIVKRSGRR…VYRDFKETSD (91 aa)) enclose the ATP-cone domain.

It belongs to the NrdR family. Zn(2+) serves as cofactor.

Negatively regulates transcription of bacterial ribonucleotide reductase nrd genes and operons by binding to NrdR-boxes. This is Transcriptional repressor NrdR from Caulobacter vibrioides (strain ATCC 19089 / CIP 103742 / CB 15) (Caulobacter crescentus).